An 806-amino-acid polypeptide reads, in one-letter code: Phenylalanine--tRNA ligase beta subunit (806 aa).

The tRNA-binding domain maps to 40–155 (NKGVKGVVVG…SDAEVGADAL (116 aa)). Residues 409-484 (VQERTVSVTA…RLYGYDHIPV (76 aa)) enclose the B5 domain. The Mg(2+) site is built by aspartate 462, aspartate 468, glutamate 471, and glutamate 472. The FDX-ACB domain occupies 712 to 805 (PRFPSMTRDM…VEEKFGAELR (94 aa)).

This sequence belongs to the phenylalanyl-tRNA synthetase beta subunit family. Type 1 subfamily. In terms of assembly, tetramer of two alpha and two beta subunits. It depends on Mg(2+) as a cofactor.

It localises to the cytoplasm. It catalyses the reaction tRNA(Phe) + L-phenylalanine + ATP = L-phenylalanyl-tRNA(Phe) + AMP + diphosphate + H(+). In Bacillus cereus (strain ATCC 14579 / DSM 31 / CCUG 7414 / JCM 2152 / NBRC 15305 / NCIMB 9373 / NCTC 2599 / NRRL B-3711), this protein is Phenylalanine--tRNA ligase beta subunit.